Here is a 237-residue protein sequence, read N- to C-terminus: Large ribosomal subunit protein uL1 (237 aa).

This sequence belongs to the universal ribosomal protein uL1 family. In terms of assembly, part of the 50S ribosomal subunit.

Functionally, binds directly to 23S rRNA. The L1 stalk is quite mobile in the ribosome, and is involved in E site tRNA release. Its function is as follows. Protein L1 is also a translational repressor protein, it controls the translation of the L11 operon by binding to its mRNA. The protein is Large ribosomal subunit protein uL1 of Dehalococcoides mccartyi (strain ATCC BAA-2100 / JCM 16839 / KCTC 5957 / BAV1).